The following is a 253-amino-acid chain: NAC transcription factor 32 (253 aa).

An NAC domain is found at 10-160 (FPPGFRFHPT…DWVLCRIYNK (151 aa)). Residues 106–166 (VGIKKALVFY…IYNKKGVIEK (61 aa)) mediate DNA binding.

Expressed in germinating seeds, roots, leaf veins, open flowers and silique stalks.

Its subcellular location is the nucleus. Transcriptional activator that positively regulates age-dependent senescence, dark-induced leaf senescence and stress-induced senescence. Regulates leaf senescence through the modulation of the expression of senescence-associated genes SGR1/NYE1, SAG113 and SAUR36/SAG201, which are involved in chlorophyll degradation, and abscisic acid (ABA) and auxin promotion of senescence, respectively. Promotes reactive oxygen species (ROS) production during age-dependent and stress-induced senescence. Positively regulates auxin-mediated responses in roots. Stress-responsive NAC transcription factor involved in ABA-inducible leaf senescence signaling. Required for normal seed development and morphology. The chain is NAC transcription factor 32 from Arabidopsis thaliana (Mouse-ear cress).